The following is an 810-amino-acid chain: DNA gyrase subunit A (810 aa).

The Topo IIA-type catalytic domain occupies 36 to 502; that stretch reads LPDVRDGLKP…EVLKTSMSDL (467 aa). The O-(5'-phospho-DNA)-tyrosine intermediate role is filled by Tyr124. The GyrA-box motif lies at 529-535; the sequence is QGIGGKG.

The protein belongs to the type II topoisomerase GyrA/ParC subunit family. In terms of assembly, heterotetramer, composed of two GyrA and two GyrB chains. In the heterotetramer, GyrA contains the active site tyrosine that forms a transient covalent intermediate with DNA, while GyrB binds cofactors and catalyzes ATP hydrolysis.

It localises to the cytoplasm. It carries out the reaction ATP-dependent breakage, passage and rejoining of double-stranded DNA.. Functionally, a type II topoisomerase that negatively supercoils closed circular double-stranded (ds) DNA in an ATP-dependent manner to modulate DNA topology and maintain chromosomes in an underwound state. Negative supercoiling favors strand separation, and DNA replication, transcription, recombination and repair, all of which involve strand separation. Also able to catalyze the interconversion of other topological isomers of dsDNA rings, including catenanes and knotted rings. Type II topoisomerases break and join 2 DNA strands simultaneously in an ATP-dependent manner. In Borrelia hermsii (strain HS1 / DAH), this protein is DNA gyrase subunit A.